A 260-amino-acid chain; its full sequence is Ribosomal RNA small subunit methyltransferase A (260 aa).

S-adenosyl-L-methionine contacts are provided by leucine 23, glycine 48, glutamate 69, aspartate 94, and asparagine 110.

It belongs to the class I-like SAM-binding methyltransferase superfamily. rRNA adenine N(6)-methyltransferase family. RsmA subfamily.

It is found in the cytoplasm. The enzyme catalyses adenosine(1518)/adenosine(1519) in 16S rRNA + 4 S-adenosyl-L-methionine = N(6)-dimethyladenosine(1518)/N(6)-dimethyladenosine(1519) in 16S rRNA + 4 S-adenosyl-L-homocysteine + 4 H(+). In terms of biological role, specifically dimethylates two adjacent adenosines (A1518 and A1519) in the loop of a conserved hairpin near the 3'-end of 16S rRNA in the 30S particle. May play a critical role in biogenesis of 30S subunits. In Thermotoga petrophila (strain ATCC BAA-488 / DSM 13995 / JCM 10881 / RKU-1), this protein is Ribosomal RNA small subunit methyltransferase A.